A 109-amino-acid polypeptide reads, in one-letter code: B melanoma antigen 2 (109 aa).

An N-terminal signal peptide occupies residues Met-1–Ala-17.

Belongs to the BAGE family. Not expressed in normal tissues except in testis. Expressed in 22% of melanomas, in bladder and lung carcinomas.

The protein resides in the secreted. Unknown. Candidate gene encoding tumor antigens. In Homo sapiens (Human), this protein is B melanoma antigen 2 (BAGE2).